The sequence spans 190 residues: RNA-binding protein OPG065 (190 aa).

The Z-binding domain maps to Tyr5 to Thr70. Residues Asn117–Gly184 enclose the DRBM domain.

The protein belongs to the orthopoxvirus OPG065 family. Interacts with host G1P2/ISG15. Interacts with host EIF2AK2/PKR. Interacts with host ZBP1.

Its function is as follows. RNA-binding protein that plays a role in the inhibition of multiple cellular antiviral responses activated by double-stranded RNA (dsRNA), such as inhibition of PKR activation, necroptosis, and IFN-mediated antiviral activities. Recognizes and binds Z-RNA structures via its Z-binding domain and dsRNA via its DRBM domain: RNA-binding activity is required to escape host ZBP1-dependent necroptosis. Mechanistically, the Z-binding domain binds Z-RNAs that are produced during vaccinia virus infection, thereby competing with Z-RNA detection by host ZBP1, suppressing ZBP1-dependent necroptosis. Acts as a key inhibitor of the interferon response by blocking the phosphorylation and subsequent activation of IRF3 and IRF7 kinases that are required for interferon-alpha gene expression. Inhibits NF-kappa-B activation and the ubiquitin-like protein ISG15, which is an early antiviral protein. The binding with host ISG15 subsequently blocks host ISGylation. The sequence is that of RNA-binding protein OPG065 (OPG065) from Vaccinia virus (strain Western Reserve) (VACV).